A 134-amino-acid polypeptide reads, in one-letter code: Methylglyoxal synthase (134 aa).

Residues 1–134 (MKIALIAHDR…DWRLIQERRN (134 aa)) enclose the MGS-like domain. Residues histidine 8, lysine 12, 34–37 (TGTT), and 54–55 (SG) each bind substrate. Catalysis depends on aspartate 60, which acts as the Proton donor/acceptor. Histidine 87 contributes to the substrate binding site.

This sequence belongs to the methylglyoxal synthase family.

It carries out the reaction dihydroxyacetone phosphate = methylglyoxal + phosphate. Catalyzes the formation of methylglyoxal from dihydroxyacetone phosphate. The protein is Methylglyoxal synthase of Lysinibacillus sphaericus (strain C3-41).